Reading from the N-terminus, the 800-residue chain is Phenylalanine--tRNA ligase beta subunit (800 aa).

In terms of domain architecture, tRNA-binding spans 39-152; that stretch reads AAGLSKIVVG…EDAVPGEEVF (114 aa). The region spanning 405–480 is the B5 domain; it reads TSDVEVSSTL…RIYGYDRLPT (76 aa). 4 residues coordinate Mg(2+): Asp458, Asp464, Glu467, and Glu468. The region spanning 707–800 is the FDX-ACB domain; it reads TKFPAVSRDV…LEEKVNAEVR (94 aa).

This sequence belongs to the phenylalanyl-tRNA synthetase beta subunit family. Type 1 subfamily. As to quaternary structure, tetramer of two alpha and two beta subunits. It depends on Mg(2+) as a cofactor.

Its subcellular location is the cytoplasm. The enzyme catalyses tRNA(Phe) + L-phenylalanine + ATP = L-phenylalanyl-tRNA(Phe) + AMP + diphosphate + H(+). The polypeptide is Phenylalanine--tRNA ligase beta subunit (Streptococcus pneumoniae (strain ATCC BAA-255 / R6)).